A 367-amino-acid chain; its full sequence is tRNA/tmRNA (uracil-C(5))-methyltransferase (367 aa).

Residues glutamine 190, tyrosine 218, asparagine 223, glutamate 239, and aspartate 299 each contribute to the S-adenosyl-L-methionine site. The active-site Nucleophile is the cysteine 324. Residue glutamate 358 is the Proton acceptor of the active site.

Belongs to the class I-like SAM-binding methyltransferase superfamily. RNA M5U methyltransferase family. TrmA subfamily.

The enzyme catalyses uridine(54) in tRNA + S-adenosyl-L-methionine = 5-methyluridine(54) in tRNA + S-adenosyl-L-homocysteine + H(+). It carries out the reaction uridine(341) in tmRNA + S-adenosyl-L-methionine = 5-methyluridine(341) in tmRNA + S-adenosyl-L-homocysteine + H(+). Functionally, dual-specificity methyltransferase that catalyzes the formation of 5-methyluridine at position 54 (m5U54) in all tRNAs, and that of position 341 (m5U341) in tmRNA (transfer-mRNA). The chain is tRNA/tmRNA (uracil-C(5))-methyltransferase from Dickeya chrysanthemi (strain Ech1591) (Dickeya zeae (strain Ech1591)).